The following is a 1288-amino-acid chain: Probable serine/threonine-protein kinase drkD (1288 aa).

The span at 1–12 (MEGSFQFNKSKQ) shows a compositional bias: polar residues. Disordered regions lie at residues 1 to 132 (MEGS…QYHP), 156 to 223 (FNVS…PEEI), and 269 to 386 (SFGH…DDEE). Composition is skewed to low complexity over residues 13–79 (TNNN…NSTS) and 156–220 (FNVS…QQQP). Residues 221 to 248 (EEIEGELNRERQERDKMLHEEAEIEQYK) adopt a coiled-coil conformation. The segment covering 271–291 (GHITSANSDETTNNESGSPIN) has biased composition (polar residues). Over residues 302–343 (PHSSHNEDHQSDQDNHGQFMNDEHQSTDDDQNKSDNEKESES) the composition is skewed to basic and acidic residues. The span at 344–354 (ARNSGDLQQKV) shows a compositional bias: polar residues. Acidic residues predominate over residues 376-386 (EGEEEDDDDEE). LRR repeat units follow at residues 400–421 (KSTK…VWSI), 423–444 (ELRD…IGLL), 446–468 (HLKR…YSLP), 469–490 (RLTT…INRL), 492–513 (SLKT…TNLH), 517–538 (NLVE…MLES), and 540–561 (HLQV…LKKS). 3 disordered regions span residues 690–717 (WDQQ…VLTG), 733–764 (PTQQ…QQQQ), and 796–825 (QQQQ…KDHQ). Polar residues-rich tracts occupy residues 701–717 (SPNV…VLTG) and 733–757 (PTQQ…HNNN). In terms of domain architecture, Protein kinase spans 851 to 1104 (IAIGARIGRG…EILPIMEGMI (254 aa)). ATP contacts are provided by residues 857 to 865 (IGRGGYGQV) and lysine 878. Aspartate 974 acts as the Proton acceptor in catalysis. Disordered stretches follow at residues 1118-1141 (GRPI…QNMA) and 1245-1288 (QQQL…NDKK). The segment covering 1257–1268 (NRLNYNFNNSNN) has biased composition (low complexity). Residues 1269–1282 (SDIQPMQQENNYRM) show a composition bias toward polar residues.

The protein belongs to the protein kinase superfamily. TKL Ser/Thr protein kinase family.

It catalyses the reaction L-seryl-[protein] + ATP = O-phospho-L-seryl-[protein] + ADP + H(+). It carries out the reaction L-threonyl-[protein] + ATP = O-phospho-L-threonyl-[protein] + ADP + H(+). The polypeptide is Probable serine/threonine-protein kinase drkD (drkD) (Dictyostelium discoideum (Social amoeba)).